Here is a 347-residue protein sequence, read N- to C-terminus: Quinolinate synthase (347 aa).

Residues His-47 and Ser-68 each contribute to the iminosuccinate site. Cys-113 contacts [4Fe-4S] cluster. Residues 139–141 (YAN) and Ser-156 each bind iminosuccinate. Cys-200 is a binding site for [4Fe-4S] cluster. Residues 226–228 (HPE) and Thr-243 each bind iminosuccinate. Cys-297 provides a ligand contact to [4Fe-4S] cluster.

It belongs to the quinolinate synthase family. Type 1 subfamily. The cofactor is [4Fe-4S] cluster.

It localises to the cytoplasm. The catalysed reaction is iminosuccinate + dihydroxyacetone phosphate = quinolinate + phosphate + 2 H2O + H(+). It functions in the pathway cofactor biosynthesis; NAD(+) biosynthesis; quinolinate from iminoaspartate: step 1/1. In terms of biological role, catalyzes the condensation of iminoaspartate with dihydroxyacetone phosphate to form quinolinate. In Escherichia coli O127:H6 (strain E2348/69 / EPEC), this protein is Quinolinate synthase.